The sequence spans 139 residues: Holo-[acyl-carrier-protein] synthase (139 aa).

Positions 8 and 61 each coordinate Mg(2+).

This sequence belongs to the P-Pant transferase superfamily. AcpS family. It depends on Mg(2+) as a cofactor.

It localises to the cytoplasm. The enzyme catalyses apo-[ACP] + CoA = holo-[ACP] + adenosine 3',5'-bisphosphate + H(+). In terms of biological role, transfers the 4'-phosphopantetheine moiety from coenzyme A to a Ser of acyl-carrier-protein. The sequence is that of Holo-[acyl-carrier-protein] synthase from Bradyrhizobium sp. (strain BTAi1 / ATCC BAA-1182).